The sequence spans 359 residues: Probable dual-specificity RNA methyltransferase RlmN (359 aa).

The active-site Proton acceptor is E91. Residues 97-335 enclose the Radical SAM core domain; that stretch reads QHYGHSVCVT…CVVRQEHGTD (239 aa). C104 and C340 are oxidised to a cystine. The [4Fe-4S] cluster site is built by C111, C115, and C118. S-adenosyl-L-methionine-binding positions include 163–164, S195, 218–220, and N296; these read GE and SLH. Residue C340 is the S-methylcysteine intermediate of the active site.

This sequence belongs to the radical SAM superfamily. RlmN family. The cofactor is [4Fe-4S] cluster.

The protein resides in the cytoplasm. The catalysed reaction is adenosine(2503) in 23S rRNA + 2 reduced [2Fe-2S]-[ferredoxin] + 2 S-adenosyl-L-methionine = 2-methyladenosine(2503) in 23S rRNA + 5'-deoxyadenosine + L-methionine + 2 oxidized [2Fe-2S]-[ferredoxin] + S-adenosyl-L-homocysteine. It carries out the reaction adenosine(37) in tRNA + 2 reduced [2Fe-2S]-[ferredoxin] + 2 S-adenosyl-L-methionine = 2-methyladenosine(37) in tRNA + 5'-deoxyadenosine + L-methionine + 2 oxidized [2Fe-2S]-[ferredoxin] + S-adenosyl-L-homocysteine. Functionally, specifically methylates position 2 of adenine 2503 in 23S rRNA and position 2 of adenine 37 in tRNAs. The chain is Probable dual-specificity RNA methyltransferase RlmN from Streptococcus pyogenes serotype M12 (strain MGAS2096).